The chain runs to 168 residues: Large ribosomal subunit protein bL17 (168 aa).

Residues 124 to 168 (QATGEAEAATKRAAKDAEGSAEVSEAKVDTTKADDEAAAEESKDA) form a disordered region. Positions 131 to 168 (AATKRAAKDAEGSAEVSEAKVDTTKADDEAAAEESKDA) are enriched in basic and acidic residues.

It belongs to the bacterial ribosomal protein bL17 family. As to quaternary structure, part of the 50S ribosomal subunit. Contacts protein L32.

The polypeptide is Large ribosomal subunit protein bL17 (Streptomyces coelicolor (strain ATCC BAA-471 / A3(2) / M145)).